We begin with the raw amino-acid sequence, 445 residues long: Glutamyl-tRNA(Gln) amidotransferase subunit D (445 aa).

Positions 93–425 (SEIKIISTGG…EKIRSLMISN (333 aa)) constitute an Asparaginase/glutaminase domain. Active-site residues include threonine 103, threonine 179, aspartate 180, and lysine 258.

The protein belongs to the asparaginase 1 family. GatD subfamily. As to quaternary structure, heterodimer of GatD and GatE.

It catalyses the reaction L-glutamyl-tRNA(Gln) + L-glutamine + ATP + H2O = L-glutaminyl-tRNA(Gln) + L-glutamate + ADP + phosphate + H(+). Functionally, allows the formation of correctly charged Gln-tRNA(Gln) through the transamidation of misacylated Glu-tRNA(Gln) in organisms which lack glutaminyl-tRNA synthetase. The reaction takes place in the presence of glutamine and ATP through an activated gamma-phospho-Glu-tRNA(Gln). The GatDE system is specific for glutamate and does not act on aspartate. The polypeptide is Glutamyl-tRNA(Gln) amidotransferase subunit D (Saccharolobus islandicus (strain Y.N.15.51 / Yellowstone #2) (Sulfolobus islandicus)).